The chain runs to 785 residues: MSYNSSNSGSGRYDDNRSGNSSYSSTSRGGSSYGNRSGSDRDYNRDGGSYNRDSSRDYNSSSGSGSGNGSSSYNKYPSSSSSSSSSSSTSSYGPSKGKDFQDSWGSSSTGTTNGYNGSSNGYNSSSNGYNSSNSSSSYGASNNGYNNSSGSSSSGSSGSSNGGSYNNSGSSNSNGYSKPTSNYSYSNGYTGPTTNYSSYSNGYSTPPTSTSTSSSSTTTTTTTTPSTSYNGGSTSYGYSTSGSSNGYGGYSQPPIPSYDPSSVSSYGAVTPASSSYNASVPGSSYGNSTYRSSGYGNQSYATTNSYGSSSYGSSGFYGNAKANTGSFGSALSPISWDLSKLPRFEKNFYLEHPDVSKFTQEEIEKFRASFQMTVKGREVPPPIMQFTQAPFPGYLMKEIIGAGFPNPTPIQSQAWPIALKGRDIIGLAKTGSGKTLAFLLPSIVHINAQPVLREDDGPIVLVLAPTRELALQIQEETNKFGGTSQISNTCVYGGASKHTQVAALKKGVEIVIATPGRLIDILESGKTNLRRVTYLVLDEADRMLDMGFEPQIRKIISQIRPDRQTLMFSATWPKEVQALAHDFLTDHIQVHIGSTEITANHNVRQIVEVCQDFEKKERMLSFLGSVGRDEKVIVFAETRKGVDDLQRVLQFSGFKSIGIHGNKSQPERDFVLSQFKNGMVPIMIATDVASRGLDIKDIKYVVNYDFPNTIEVYIHRIGRTARAGASGVSYSLLTTDNARLANELIKVLTEAKQKIPIELSNLSVTPSTSSNTKKFSPYPTYSKRY.

Composition is skewed to low complexity over residues 1 to 11, 18 to 37, 49 to 95, and 105 to 177; these read MSYNSSNSGSG, SGNS…GNRS, SYNR…YGPS, and GSSS…NGYS. The interval 1–233 is disordered; it reads MSYNSSNSGS…TPSTSYNGGS (233 aa). Positions 178 to 191 are enriched in polar residues; that stretch reads KPTSNYSYSNGYTG. Residues 192-233 show a composition bias toward low complexity; the sequence is PTTNYSSYSNGYSTPPTSTSTSSSSTTTTTTTTPSTSYNGGS. The Q motif motif lies at 384–412; that stretch reads MQFTQAPFPGYLMKEIIGAGFPNPTPIQS. The Helicase ATP-binding domain occupies 415–590; sequence WPIALKGRDI…HDFLTDHIQV (176 aa). 428–435 provides a ligand contact to ATP; it reads AKTGSGKT. Positions 538–541 match the DEAD box motif; it reads DEAD. The Helicase C-terminal domain maps to 602-763; it reads NVRQIVEVCQ…KIPIELSNLS (162 aa). Positions 764–774 are enriched in polar residues; it reads VTPSTSSNTKK. The segment at 764-785 is disordered; that stretch reads VTPSTSSNTKKFSPYPTYSKRY.

This sequence belongs to the DEAD box helicase family. DDX5/DBP2 subfamily.

The protein resides in the cytoplasm. The protein localises to the nucleus. It catalyses the reaction ATP + H2O = ADP + phosphate + H(+). Functionally, probable ATP-dependent RNA helicase which may be involved nonsense-mediated mRNA decay and ribosome biogenesis through rRNA processing. This is Probable ATP-dependent RNA helicase ddx17 (ddx17) from Dictyostelium discoideum (Social amoeba).